The chain runs to 560 residues: MNWSFLLQLVITILLIVLGANWLLSSFLLDFKRDLTGVALSQQSSISSVRKENETAYYRSILVPTGFPLTTGLGLSLKYKIRNGNFGDVWNAIMEVSKGKNIIKFTGREKSYSLSELNGMAKRIFPKLSNKNFKNIGIANSIATVEGFTLSLASMMTSIRTGSIPHFLPAVPRQRLEDVDVLIIDSWKSFKMLNGSEDWYKLIVVCDDPIESLQFDANCDVITWKELIDGFTKDTEYQYTPPDDNSDDKKLFAYVTSPWNGTNSFNQICLVSNIAEFIKGFPLGNELNSNEYLTISTKLANSSASLQIWGKLFAVLLHGGSASFINPTTIDCESLQETTLLFTETKDVVKLIDSNSRSGLLNKIYLSWATNLLSEGIFTKIARIEPHSLEKLRCVYLADNVKDAEVISTFPEKIPQLKKTNRRITPSTEQLNKIRAQLGSRVVLELYCPYAIMGPVAHTNFYDYRVFGKSVDDNVVCYGTLSTTLEGKMVETETNPHLNIEKKQGMLCIRGFSIGKPVESDRLEKALHLAERFGGGEGWMPLVGVFGLFGQDGCLYIYNQ.

5 helical membrane-spanning segments follow: residues 9 to 29, 61 to 81, 136 to 156, 305 to 325, and 442 to 462; these read LVIT…SFLL, ILVP…KYKI, IGIA…ASMM, SLQI…ASFI, and VVLE…TNFY.

The protein localises to the membrane. This is an uncharacterized protein from Saccharomyces cerevisiae (strain ATCC 204508 / S288c) (Baker's yeast).